Reading from the N-terminus, the 335-residue chain is Mitochondrial amidoxime reducing component 2 (335 aa).

Residues methionine 1 to leucine 35 constitute a mitochondrion transit peptide. Residues lysine 59, lysine 138, and lysine 144 each participate in a glycyl lysine isopeptide (Lys-Gly) (interchain with G-Cter in ubiquitin) cross-link. Lysine 156 is subject to N6-acetyllysine; alternate. Lysine 156 is covalently cross-linked (Glycyl lysine isopeptide (Lys-Gly) (interchain with G-Cter in ubiquitin); alternate). Residues lysine 173, lysine 187, lysine 287, and lysine 294 each participate in a glycyl lysine isopeptide (Lys-Gly) (interchain with G-Cter in ubiquitin) cross-link. Residues glycine 188–methionine 334 form the MOSC domain.

In terms of assembly, component of a complex composed of cytochrome b5, NADH-cytochrome b5 reductase (CYB5R3) and MTARC2. The cofactor is Mo-molybdopterin. Ubiquitinated by PRKN during mitophagy, leading to its degradation and enhancement of mitophagy. Deubiquitinated by USP30.

The protein resides in the mitochondrion outer membrane. It is found in the peroxisome. The catalysed reaction is N(omega)-hydroxy-L-arginine + 2 Fe(II)-[cytochrome b5] + 2 H(+) = L-arginine + 2 Fe(III)-[cytochrome b5] + H2O. In terms of biological role, catalyzes the reduction of N-oxygenated molecules, acting as a counterpart of cytochrome P450 and flavin-containing monooxygenases in metabolic cycles. As a component of prodrug-converting system, reduces a multitude of N-hydroxylated prodrugs particularly amidoximes, leading to increased drug bioavailability. May be involved in mitochondrial N(omega)-hydroxy-L-arginine (NOHA) reduction, regulating endogenous nitric oxide levels and biosynthesis. Postulated to cleave the N-OH bond of N-hydroxylated substrates in concert with electron transfer from NADH to cytochrome b5 reductase then to cytochrome b5, the ultimate electron donor that primes the active site for substrate reduction. The polypeptide is Mitochondrial amidoxime reducing component 2 (MTARC2) (Macaca fascicularis (Crab-eating macaque)).